A 123-amino-acid polypeptide reads, in one-letter code: Large ribosomal subunit protein uL29 (123 aa).

The protein belongs to the universal ribosomal protein uL29 family.

The protein is Large ribosomal subunit protein uL29 (rpl-35) of Caenorhabditis elegans.